We begin with the raw amino-acid sequence, 347 residues long: tRNA N6-adenosine threonylcarbamoyltransferase (347 aa).

Fe cation is bound by residues His-111 and His-115. Substrate is bound by residues 133–137, Asp-166, Gly-179, and Asn-278; that span reads LASGG. Asp-306 serves as a coordination point for Fe cation.

It belongs to the KAE1 / TsaD family. The cofactor is Fe(2+).

It is found in the cytoplasm. It carries out the reaction L-threonylcarbamoyladenylate + adenosine(37) in tRNA = N(6)-L-threonylcarbamoyladenosine(37) in tRNA + AMP + H(+). Required for the formation of a threonylcarbamoyl group on adenosine at position 37 (t(6)A37) in tRNAs that read codons beginning with adenine. Is involved in the transfer of the threonylcarbamoyl moiety of threonylcarbamoyl-AMP (TC-AMP) to the N6 group of A37, together with TsaE and TsaB. TsaD likely plays a direct catalytic role in this reaction. The polypeptide is tRNA N6-adenosine threonylcarbamoyltransferase (Paramagnetospirillum magneticum (strain ATCC 700264 / AMB-1) (Magnetospirillum magneticum)).